Here is a 378-residue protein sequence, read N- to C-terminus: RNA polymerase sigma factor SigA (378 aa).

The disordered stretch occupies residues 1-29 (MKNKTEVKNGGEKKNSKKVSKEESAKEKN). The sigma-70 factor domain-2 stretch occupies residues 145-215 (LAEANLRLVV…TRAIADQART (71 aa)). The Interaction with polymerase core subunit RpoC motif lies at 169–172 (DLIQ). Residues 224 to 300 (ETINKLIRVS…DDEAPAPADA (77 aa)) are sigma-70 factor domain-3. The segment at 313–366 (ILNTLTPREEKVLRLRFGLDDGRARTLEEVGKEFNVTRERIRQIEAKALRKLRH) is sigma-70 factor domain-4. A DNA-binding region (H-T-H motif) is located at residues 339–358 (LEEVGKEFNVTRERIRQIEA).

Belongs to the sigma-70 factor family. RpoD/SigA subfamily. Interacts transiently with the RNA polymerase catalytic core.

It localises to the cytoplasm. In terms of biological role, sigma factors are initiation factors that promote the attachment of RNA polymerase to specific initiation sites and are then released. This sigma factor is the primary sigma factor during exponential growth. The protein is RNA polymerase sigma factor SigA of Clostridium acetobutylicum (strain ATCC 824 / DSM 792 / JCM 1419 / IAM 19013 / LMG 5710 / NBRC 13948 / NRRL B-527 / VKM B-1787 / 2291 / W).